The following is an 874-amino-acid chain: Translation initiation factor IF-2 (874 aa).

The interval 1-262 (MEDKNKTIKE…EKSTSDRDFS (262 aa)) is disordered. The segment covering 54-63 (SKPPVMPLPL) has biased composition (pro residues). Basic and acidic residues predominate over residues 83–104 (AKREESPGKQDAGRPPRDKDTR). Over residues 141–222 (SGGGYQGNRG…NRGPRSGGTG (82 aa)) the composition is skewed to gly residues. The span at 235 to 244 (LSQSRGSSVT) shows a compositional bias: polar residues. Residues 250–262 (HDKEKSTSDRDFS) show a composition bias toward basic and acidic residues. Residues 369–538 (NRPPVVTIMG…LLQAEVMDLK (170 aa)) form the tr-type G domain. The interval 378–385 (GHVDHGKT) is G1. Residue 378–385 (GHVDHGKT) coordinates GTP. The tract at residues 403–407 (GITQH) is G2. The G3 stretch occupies residues 424 to 427 (DTPG). GTP-binding positions include 424 to 428 (DTPGH) and 478 to 481 (NKID). The segment at 478–481 (NKID) is G4. The segment at 514–516 (SAR) is G5.

Belongs to the TRAFAC class translation factor GTPase superfamily. Classic translation factor GTPase family. IF-2 subfamily.

The protein resides in the cytoplasm. In terms of biological role, one of the essential components for the initiation of protein synthesis. Protects formylmethionyl-tRNA from spontaneous hydrolysis and promotes its binding to the 30S ribosomal subunits. Also involved in the hydrolysis of GTP during the formation of the 70S ribosomal complex. This is Translation initiation factor IF-2 from Leptospira interrogans serogroup Icterohaemorrhagiae serovar copenhageni (strain Fiocruz L1-130).